Reading from the N-terminus, the 402-residue chain is MNFARMENQDLSGKTVLIREDLNVPVQNGKISNDARLQSSLPTIKLALEKGAAVLVCSHLGRPTEGDYEEKYSLQPVADYLSEHLNQPVRLDKTYTEQEVTVAPGDVVLLENVRFNVGEKKNSDSLSQHYADLCDVFVMDAFGTAHRAQASTEGVIQAAAKAGKVVCAGPLLAAELDALDKALHKPKKPLVAIVGGSKVSTKLDVLISLAKICDQIIVGGGIANTFIAAQGHSVGASLYEAEMIDTAKQIMQQTDILLPKNVVVADKNQINFDDFLNSLESATPIHRSIEQVGEDEMILDIASEGAEHIFEAVKNAATILWNGPVGVFEVEAFSEGTRLLSEAVKDSAGFSIAGGGDTLAAIHKFNVEDGVSYMSTGGGAFLEFVEGKTLPAVAALEANHSK.

Residues 21–23, R36, 59–62, R114, and R147 contribute to the substrate site; these read DLN and HLGR. ATP is bound by residues K202, E329, and 355–358; that span reads GGDT.

Belongs to the phosphoglycerate kinase family. In terms of assembly, monomer.

It localises to the cytoplasm. It catalyses the reaction (2R)-3-phosphoglycerate + ATP = (2R)-3-phospho-glyceroyl phosphate + ADP. Its pathway is carbohydrate degradation; glycolysis; pyruvate from D-glyceraldehyde 3-phosphate: step 2/5. The chain is Phosphoglycerate kinase from Psychrobacter sp. (strain PRwf-1).